A 75-amino-acid polypeptide reads, in one-letter code: RNA-binding protein KhpA (75 aa).

A KH domain is found at 29–75 (KVVYHLTVHPDDVGKVIGKNGRIAKAIRTVVYASKTDGNKRIYLDIM).

It belongs to the KhpA RNA-binding protein family. Forms a complex with KhpB.

The protein localises to the cytoplasm. In terms of biological role, a probable RNA chaperone. Forms a complex with KhpB which binds to cellular RNA and controls its expression. Plays a role in peptidoglycan (PG) homeostasis and cell length regulation. This Oceanobacillus iheyensis (strain DSM 14371 / CIP 107618 / JCM 11309 / KCTC 3954 / HTE831) protein is RNA-binding protein KhpA.